Here is a 110-residue protein sequence, read N- to C-terminus: Integration host factor subunit alpha (110 aa).

Belongs to the bacterial histone-like protein family. Heterodimer of an alpha and a beta chain.

In terms of biological role, this protein is one of the two subunits of integration host factor, a specific DNA-binding protein that functions in genetic recombination as well as in transcriptional and translational control. In Bdellovibrio bacteriovorus (strain ATCC 15356 / DSM 50701 / NCIMB 9529 / HD100), this protein is Integration host factor subunit alpha.